We begin with the raw amino-acid sequence, 607 residues long: Dolichyl-diphosphooligosaccharide--protein glycosyltransferase subunit 1 (607 aa).

Positions 1–23 are cleaved as a signal peptide; it reads MEAPAAGLFLLLLLGTWAPAPGS. The Lumenal segment spans residues 24 to 438; that stretch reads ASSEAPPLIN…TFNKVLMLQE (415 aa). Lys187 is subject to N6-acetyllysine. Asn299 carries an N-linked (GlcNAc...) asparagine glycan. A helical membrane pass occupies residues 439-457; sequence PLLVVAAFYILFFTVIIYV. Residues 458–607 are Cytoplasmic-facing; the sequence is RLDFSITKDP…TKIDHILDAL (150 aa). The residue at position 538 (Lys538) is an N6-acetyllysine; alternate. Residue Lys538 forms a Glycyl lysine isopeptide (Lys-Gly) (interchain with G-Cter in SUMO2); alternate linkage.

It belongs to the OST1 family. Component of the oligosaccharyltransferase (OST) complex. OST exists in two different complex forms which contain common core subunits RPN1, RPN2, OST48, OST4, DAD1 and TMEM258, either STT3A or STT3B as catalytic subunits, and form-specific accessory subunits. STT3A complex assembly occurs through the formation of 3 subcomplexes. Subcomplex 1 contains RPN1 and TMEM258, subcomplex 2 contains the STT3A-specific subunits STT3A, DC2/OSTC, and KCP2 as well as the core subunit OST4, and subcomplex 3 contains RPN2, DAD1, and OST48. The STT3A complex can form stable complexes with the Sec61 complex or with both the Sec61 and TRAP complexes. Interacts with TMEM35A/NACHO. Ubiquitinated by the ECS(ASB11) complex. Ubiquitinated by RNF128, leading to degradation in a proteasome/lysosome-dependent manner. Post-translationally, ufmylated by UFL1 in response to endoplasmic reticulum stress, promoting reticulophagy of endoplasmic reticulum sheets. As to expression, expressed in all tissues tested.

The protein localises to the endoplasmic reticulum membrane. It localises to the melanosome. Its pathway is protein modification; protein glycosylation. Subunit of the oligosaccharyl transferase (OST) complex that catalyzes the initial transfer of a defined glycan (Glc(3)Man(9)GlcNAc(2) in eukaryotes) from the lipid carrier dolichol-pyrophosphate to an asparagine residue within an Asn-X-Ser/Thr consensus motif in nascent polypeptide chains, the first step in protein N-glycosylation. N-glycosylation occurs cotranslationally and the complex associates with the Sec61 complex at the channel-forming translocon complex that mediates protein translocation across the endoplasmic reticulum (ER). All subunits are required for a maximal enzyme activity. In Homo sapiens (Human), this protein is Dolichyl-diphosphooligosaccharide--protein glycosyltransferase subunit 1.